The chain runs to 144 residues: UPF0735 ACT domain-containing protein LSEI_1046 (144 aa).

The ACT domain occupies 68 to 143 (VISLMLHHDR…GVSDVHLVSV (76 aa)).

It belongs to the UPF0735 family.

This is UPF0735 ACT domain-containing protein LSEI_1046 from Lacticaseibacillus paracasei (strain ATCC 334 / BCRC 17002 / CCUG 31169 / CIP 107868 / KCTC 3260 / NRRL B-441) (Lactobacillus paracasei).